The chain runs to 323 residues: uncharacterized protein (323 aa).

The S4 RNA-binding domain occupies 16 to 95 (QRIDQFCLKI…DKLKIIFEDE (80 aa)). Asp-148 is an active-site residue.

It belongs to the pseudouridine synthase RluA family.

The catalysed reaction is a uridine in RNA = a pseudouridine in RNA. This is an uncharacterized protein from Mycoplasma genitalium (strain ATCC 33530 / DSM 19775 / NCTC 10195 / G37) (Mycoplasmoides genitalium).